A 181-amino-acid polypeptide reads, in one-letter code: NAD(P)H-quinone oxidoreductase subunit I, chloroplastic (181 aa).

2 consecutive 4Fe-4S ferredoxin-type domains span residues 52 to 81 and 92 to 121; these read GRIHFEFDKCIACEVCVRVCPINLPVVDWE and KSYSIDFGVCIFCGNCVEYCPTNCLSMTEE. Residues cysteine 61, cysteine 64, cysteine 67, cysteine 71, cysteine 101, cysteine 104, cysteine 107, and cysteine 111 each coordinate [4Fe-4S] cluster.

It belongs to the complex I 23 kDa subunit family. In terms of assembly, NDH is composed of at least 16 different subunits, 5 of which are encoded in the nucleus. The cofactor is [4Fe-4S] cluster.

The protein resides in the plastid. The protein localises to the chloroplast thylakoid membrane. It carries out the reaction a plastoquinone + NADH + (n+1) H(+)(in) = a plastoquinol + NAD(+) + n H(+)(out). The enzyme catalyses a plastoquinone + NADPH + (n+1) H(+)(in) = a plastoquinol + NADP(+) + n H(+)(out). Its function is as follows. NDH shuttles electrons from NAD(P)H:plastoquinone, via FMN and iron-sulfur (Fe-S) centers, to quinones in the photosynthetic chain and possibly in a chloroplast respiratory chain. The immediate electron acceptor for the enzyme in this species is believed to be plastoquinone. Couples the redox reaction to proton translocation, and thus conserves the redox energy in a proton gradient. This is NAD(P)H-quinone oxidoreductase subunit I, chloroplastic from Zygnema circumcarinatum (Green alga).